We begin with the raw amino-acid sequence, 149 residues long: FAD synthase (149 aa).

Residues 10-11, 15-18, Asp95, and Tyr123 contribute to the ATP site; these read TF and HPGH.

Belongs to the archaeal FAD synthase family. Homodimer. Requires Co(2+) as cofactor.

It carries out the reaction FMN + ATP + H(+) = FAD + diphosphate. It participates in cofactor biosynthesis; FAD biosynthesis; FAD from FMN: step 1/1. With respect to regulation, is inhibited by the product PPi. In terms of biological role, catalyzes the transfer of the AMP portion of ATP to flavin mononucleotide (FMN) to produce flavin adenine dinucleotide (FAD) coenzyme. To a lesser extent, is also able to utilize other nucleotides such as CTP and GTP as substrates, producing the modified coenzymes, flavin cytosine dinucleotide (FCD) and flavin guanine dinucleotide (FGD), respectively. Does not catalyze the reverse reaction to produce FMN and ATP from FAD and PPi. Does not function as a glycerol-3-phosphate cytidylyltransferase, as previously annotated in the complete genome. The polypeptide is FAD synthase (ribL) (Methanocaldococcus jannaschii (strain ATCC 43067 / DSM 2661 / JAL-1 / JCM 10045 / NBRC 100440) (Methanococcus jannaschii)).